The sequence spans 333 residues: MKQVVYVASPDSQQIHVWQLGSTGELTLLQTVEVPGQVQPMTINPNQRHLYVGVRPDFGIVSYNIADDGTLTAAGMAPLPGSPTHIGTDLQGRFLFSASYSFNCVSISPIDEHGVVQTPIQQLNDLPAPHSANIDPTNQILLVPCLKEDKVRLFDLSAEGKLTPHAQSDVTVAAGAGPRHMAFHPNQQVAYCVNELNSSVDVYQISNNGQEYKIIQTLDAMPADFTDTCWAADIHITPNGRHLYISDRTASLLGIFSVSEDGREIALVGHHQTEAQPRGFNIDHNGQFLISSGQKSDHIEVYRIDQISGELTTLKRYPVGKGPMWVSILAPRA.

It belongs to the cycloisomerase 2 family.

It carries out the reaction 6-phospho-D-glucono-1,5-lactone + H2O = 6-phospho-D-gluconate + H(+). The protein operates within carbohydrate degradation; pentose phosphate pathway; D-ribulose 5-phosphate from D-glucose 6-phosphate (oxidative stage): step 2/3. Catalyzes the hydrolysis of 6-phosphogluconolactone to 6-phosphogluconate. In Yersinia enterocolitica serotype O:8 / biotype 1B (strain NCTC 13174 / 8081), this protein is 6-phosphogluconolactonase.